Reading from the N-terminus, the 352-residue chain is Protein CIA1 (352 aa).

7 WD repeats span residues 18-64 (GHTD…RSWT), 72-111 (THTR…FECI), 116-155 (GHEN…EYDC), 161-200 (GHTQ…GEYQ), 211-250 (GHSS…MQSG), 265-303 (YHDR…SVDG), and 315-352 (AHEN…ATKP).

This sequence belongs to the WD repeat CIA1 family. In terms of assembly, part of a complex composed of AE7, CIA1, MMS19 and NAR1. Interacts with AE7 and NAR1.

It is found in the nucleus. The protein resides in the cytoplasm. Functionally, essential component of the cytosolic iron-sulfur (Fe-S) protein assembly (CIA) machinery. Required for the maturation of extramitochondrial Fe/S proteins. This is Protein CIA1 from Arabidopsis thaliana (Mouse-ear cress).